Consider the following 1107-residue polypeptide: RNA2 polyprotein (1107 aa).

The interval 553-584 (SRSMRFKSPSDLWSRPSVDGGSTSTQPPSKGS) is disordered. Over residues 572-581 (GGSTSTQPPS) the composition is skewed to polar residues.

It belongs to the nepoviruses RNA2 polyprotein family. Specific enzymatic cleavages in vivo by the P1 encoded 3C-like protease yield mature proteins.

It is found in the host cell junction. The protein resides in the host plasmodesma. Its subcellular location is the host cytoplasm. It localises to the host nucleus. The protein localises to the virion. In terms of biological role, implicated in RNA2 replication. Could also be required for nematode transmission of the virus. Transports viral genome to neighboring plant cells directly through plasmosdesmata, without any budding. The movement protein allows efficient cell to cell propagation, by bypassing the host cell wall barrier. Acts by forming a tubular structure at the host plasmodesmata, enlarging it enough to allow free passage of virion capsids. The polypeptide is RNA2 polyprotein (Raspberry ringspot virus (strain S) (RpRSV)).